The primary structure comprises 1401 residues: DNA-directed RNA polymerase subunit beta'' (1401 aa).

4 residues coordinate Zn(2+): C224, C295, C302, and C305.

It belongs to the RNA polymerase beta' chain family. RpoC2 subfamily. As to quaternary structure, in plastids the minimal PEP RNA polymerase catalytic core is composed of four subunits: alpha, beta, beta', and beta''. When a (nuclear-encoded) sigma factor is associated with the core the holoenzyme is formed, which can initiate transcription. Requires Zn(2+) as cofactor.

It localises to the plastid. Its subcellular location is the chloroplast. It catalyses the reaction RNA(n) + a ribonucleoside 5'-triphosphate = RNA(n+1) + diphosphate. Its function is as follows. DNA-dependent RNA polymerase catalyzes the transcription of DNA into RNA using the four ribonucleoside triphosphates as substrates. The protein is DNA-directed RNA polymerase subunit beta'' of Ipomoea purpurea (Common morning glory).